The primary structure comprises 319 residues: Transaldolase (319 aa).

The active-site Schiff-base intermediate with substrate is K125.

Belongs to the transaldolase family. Type 1 subfamily. As to quaternary structure, homodimer.

It localises to the cytoplasm. The enzyme catalyses D-sedoheptulose 7-phosphate + D-glyceraldehyde 3-phosphate = D-erythrose 4-phosphate + beta-D-fructose 6-phosphate. Its pathway is carbohydrate degradation; pentose phosphate pathway; D-glyceraldehyde 3-phosphate and beta-D-fructose 6-phosphate from D-ribose 5-phosphate and D-xylulose 5-phosphate (non-oxidative stage): step 2/3. Functionally, transaldolase is important for the balance of metabolites in the pentose-phosphate pathway. This Ralstonia pickettii (strain 12J) protein is Transaldolase.